We begin with the raw amino-acid sequence, 154 residues long: D-aminoacyl-tRNA deacylase (154 aa).

The Gly-cisPro motif, important for rejection of L-amino acids motif lies at 142–143 (GP).

This sequence belongs to the DTD family. As to quaternary structure, homodimer.

It is found in the cytoplasm. The enzyme catalyses glycyl-tRNA(Ala) + H2O = tRNA(Ala) + glycine + H(+). The catalysed reaction is a D-aminoacyl-tRNA + H2O = a tRNA + a D-alpha-amino acid + H(+). Functionally, an aminoacyl-tRNA editing enzyme that deacylates mischarged D-aminoacyl-tRNAs. Also deacylates mischarged glycyl-tRNA(Ala), protecting cells against glycine mischarging by AlaRS. Acts via tRNA-based rather than protein-based catalysis; rejects L-amino acids rather than detecting D-amino acids in the active site. By recycling D-aminoacyl-tRNA to D-amino acids and free tRNA molecules, this enzyme counteracts the toxicity associated with the formation of D-aminoacyl-tRNA entities in vivo and helps enforce protein L-homochirality. This Acidovorax sp. (strain JS42) protein is D-aminoacyl-tRNA deacylase.